Here is a 470-residue protein sequence, read N- to C-terminus: Cysteine--tRNA ligase (470 aa).

Cysteine 28 contacts Zn(2+). Residues 30–40 (PTVYNYIHIGN) carry the 'HIGH' region motif. Zn(2+)-binding residues include cysteine 212, histidine 237, and glutamate 241. Positions 271–275 (KMSKS) match the 'KMSKS' region motif. Lysine 274 serves as a coordination point for ATP.

The protein belongs to the class-I aminoacyl-tRNA synthetase family. Monomer. Requires Zn(2+) as cofactor.

Its subcellular location is the cytoplasm. It catalyses the reaction tRNA(Cys) + L-cysteine + ATP = L-cysteinyl-tRNA(Cys) + AMP + diphosphate. In Levilactobacillus brevis (strain ATCC 367 / BCRC 12310 / CIP 105137 / JCM 1170 / LMG 11437 / NCIMB 947 / NCTC 947) (Lactobacillus brevis), this protein is Cysteine--tRNA ligase.